The primary structure comprises 426 residues: Histidine--tRNA ligase (426 aa).

Belongs to the class-II aminoacyl-tRNA synthetase family. In terms of assembly, homodimer.

It is found in the cytoplasm. The enzyme catalyses tRNA(His) + L-histidine + ATP = L-histidyl-tRNA(His) + AMP + diphosphate + H(+). The chain is Histidine--tRNA ligase from Shewanella baltica (strain OS195).